Consider the following 216-residue polypeptide: Lipoprotein signal peptidase (216 aa).

Residues methionine 1–glutamate 21 form a disordered region. A run of 3 helical transmembrane segments spans residues valine 31–threonine 51, glycine 89–alanine 109, and serine 114–aspartate 134. Catalysis depends on residues aspartate 149 and aspartate 164. The helical transmembrane segment at isoleucine 159–leucine 179 threads the bilayer. The disordered stretch occupies residues glutamine 189–alanine 216. The span at alanine 207 to alanine 216 shows a compositional bias: basic and acidic residues.

Belongs to the peptidase A8 family.

The protein localises to the cell membrane. The enzyme catalyses Release of signal peptides from bacterial membrane prolipoproteins. Hydrolyzes -Xaa-Yaa-Zaa-|-(S,diacylglyceryl)Cys-, in which Xaa is hydrophobic (preferably Leu), and Yaa (Ala or Ser) and Zaa (Gly or Ala) have small, neutral side chains.. It participates in protein modification; lipoprotein biosynthesis (signal peptide cleavage). Functionally, this protein specifically catalyzes the removal of signal peptides from prolipoproteins. The polypeptide is Lipoprotein signal peptidase (Leifsonia xyli subsp. xyli (strain CTCB07)).